The sequence spans 494 residues: Neuronal acetylcholine receptor subunit alpha-6 (494 aa).

The N-terminal stretch at 1-30 is a signal peptide; that stretch reads MLNSRDQGNLHSGLCLWLCGFLALFKGSTG. Topologically, residues 31–240 are extracellular; the sequence is CESEEQLFHR…TYSFYIRRLP (210 aa). Asn-54 and Asn-171 each carry an N-linked (GlcNAc...) asparagine glycan. 2 disulfide bridges follow: Cys-158–Cys-172 and Cys-222–Cys-223. 3 consecutive transmembrane segments (helical) span residues 241-265, 272-290, and 306-327; these read MFYTINLIIPCLFISFLTVLVFYLP, VTLCISVLLSLTVFLLVIT, and YLLFTMIFVTLSIVVTVFVLNI. Over 328–465 the chain is Cytoplasmic; that stretch reads HYRTPATHTM…WKYMAMVVDR (138 aa). Residues 399–423 are disordered; the sequence is QKSSDIAPGKRRSSQQPARWVAENS. The residue at position 401 (Ser-401) is a Phosphoserine. Residues 466–485 form a helical membrane-spanning segment; it reads VFLWVFIIVCVFGTVGLFLQ.

This sequence belongs to the ligand-gated ion channel (TC 1.A.9) family. Acetylcholine receptor (TC 1.A.9.1) subfamily. Alpha-6/CHRNA6 sub-subfamily. As to quaternary structure, neuronal AChR is composed of two different types of subunits: alpha and non-alpha (beta). CHRNA6/alpha-6 subunit can be combined to CHRNB2/beta-2 and CHRNA4/alpha-4 to give rise to functional receptors. Interacts with LYPD6. Predominantly expressed in only a few brain areas, including dopaminergic neurons, norepirephrine neurons and cells of the visual system.

Its subcellular location is the synaptic cell membrane. It catalyses the reaction K(+)(in) = K(+)(out). It carries out the reaction Na(+)(in) = Na(+)(out). The catalysed reaction is Ca(2+)(in) = Ca(2+)(out). With respect to regulation, activated by a myriad of ligands such as acetylcholine, cytisine and nicotine. CHRNA6 nAChR activity is inhibited by the antagonists alpha-conotoxin MII and PIA, a small disulfide-constrained peptides from cone snails. Component of neuronal acetylcholine receptors (nAChRs) that function as pentameric, ligand-gated cation channels with high calcium permeability among other activities. nAChRs are excitatory neurotrasnmitter receptors formed by a collection of nAChR subunits known to mediate synaptic transmission in the nervous system and the neuromuscular junction. Each nAchR subunit confers differential attributes to channel properties, including activation, deactivation and desensitization kinetics, pH sensitivity, cation permeability, and binding to allosteric modulators. CHRNA6 forms pentameric channels with CHRNB2 and CHRNA4 that exhibit high sensitivity to ACh and nicotine and are predominantly expressed in only a few brain areas, including dopaminergic neurons, norepirephrine neurons and cells of the visual system. nAChrs containing CHRNA6 subunits mediate endogenous cholinergic modulation of dopamine and gamma-aminobutyric acid (GABA) release in response to nicotine at nerve terminals. This is Neuronal acetylcholine receptor subunit alpha-6 (Chrna6) from Mus musculus (Mouse).